A 160-amino-acid chain; its full sequence is Eukaryotic translation initiation factor 5A-3 (160 aa).

Positions 1–12 (MSDEEHHFESKA) are enriched in basic and acidic residues. Residues 1–21 (MSDEEHHFESKADAGASKTYP) form a disordered region. K52 bears the Hypusine mark.

Belongs to the eIF-5A family. Lys-52 undergoes hypusination, a unique post-translational modification that consists in the addition of a butylamino group from spermidine to lysine side chain, leading to the formation of the unusual amino acid hypusine. eIF-5As are the only known proteins to undergo this modification, which is essential for their function.

Translation factor that promotes translation elongation and termination, particularly upon ribosome stalling at specific amino acid sequence contexts. Binds between the exit (E) and peptidyl (P) site of the ribosome and promotes rescue of stalled ribosome: specifically required for efficient translation of polyproline-containing peptides as well as other motifs that stall the ribosome. Acts as a ribosome quality control (RQC) cofactor by joining the RQC complex to facilitate peptidyl transfer during CAT tailing step. This chain is Eukaryotic translation initiation factor 5A-3 (EIF5A3), found in Solanum tuberosum (Potato).